The primary structure comprises 510 residues: 2,3-bisphosphoglycerate-independent phosphoglycerate mutase (510 aa).

Mn(2+) is bound by residues D12 and S62. S62 (phosphoserine intermediate) is an active-site residue. Substrate is bound by residues H121, 151 to 152 (RD), R183, R189, 258 to 261 (RPDR), and K331. Positions 398, 402, 439, 440, and 458 each coordinate Mn(2+).

The protein belongs to the BPG-independent phosphoglycerate mutase family. As to quaternary structure, monomer. Mn(2+) is required as a cofactor.

The enzyme catalyses (2R)-2-phosphoglycerate = (2R)-3-phosphoglycerate. Its pathway is carbohydrate degradation; glycolysis; pyruvate from D-glyceraldehyde 3-phosphate: step 3/5. Its function is as follows. Catalyzes the interconversion of 2-phosphoglycerate and 3-phosphoglycerate. In Clostridioides difficile (strain 630) (Peptoclostridium difficile), this protein is 2,3-bisphosphoglycerate-independent phosphoglycerate mutase.